A 306-amino-acid polypeptide reads, in one-letter code: Ribosomal protein L11 methyltransferase (306 aa).

Positions 154, 179, 201, and 242 each coordinate S-adenosyl-L-methionine.

It belongs to the methyltransferase superfamily. PrmA family.

It is found in the cytoplasm. The enzyme catalyses L-lysyl-[protein] + 3 S-adenosyl-L-methionine = N(6),N(6),N(6)-trimethyl-L-lysyl-[protein] + 3 S-adenosyl-L-homocysteine + 3 H(+). In terms of biological role, methylates ribosomal protein L11. The chain is Ribosomal protein L11 methyltransferase from Xanthomonas campestris pv. campestris (strain 8004).